The sequence spans 142 residues: Large ribosomal subunit protein uL22c (142 aa).

It belongs to the universal ribosomal protein uL22 family. In terms of assembly, part of the 50S ribosomal subunit.

The protein localises to the plastid. Its subcellular location is the chloroplast. Functionally, this protein binds specifically to 23S rRNA. Its function is as follows. The globular domain of the protein is located near the polypeptide exit tunnel on the outside of the subunit, while an extended beta-hairpin is found that lines the wall of the exit tunnel in the center of the 70S ribosome. The sequence is that of Large ribosomal subunit protein uL22c (rpl22) from Pinus koraiensis (Korean pine).